A 344-amino-acid polypeptide reads, in one-letter code: DnaJ homolog subfamily C member 25 (344 aa).

Residues 5–25 (WVLLVALSVLFLSGRAGALTE) form a helical membrane-spanning segment. A J domain is found at 33–108 (VCYDVLGVSR…ETRKDYDYML (76 aa)). The next 2 membrane-spanning stretches (helical) occupy residues 134–154 (IVIL…WWSS) and 228–248 (ILLF…SWYV).

This sequence belongs to the DNAJC25 family.

The protein resides in the membrane. The polypeptide is DnaJ homolog subfamily C member 25 (dnajc25) (Xenopus laevis (African clawed frog)).